The primary structure comprises 145 residues: Basic phospholipase A2 cL037 (145 aa).

An N-terminal signal peptide occupies residues 1 to 21 (MYPAHLLVLLAVCVSLLGASA). The propeptide occupies 22 to 27 (ILPLPL). Disulfide bonds link cysteine 38/cysteine 98, cysteine 54/cysteine 144, cysteine 56/cysteine 72, cysteine 71/cysteine 125, cysteine 78/cysteine 118, cysteine 87/cysteine 111, and cysteine 105/cysteine 116. Residues tyrosine 55, glycine 57, and glycine 59 each contribute to the Ca(2+) site. The active site involves histidine 75. Aspartate 76 is a Ca(2+) binding site. Aspartate 119 is a catalytic residue.

This sequence belongs to the phospholipase A2 family. Group I subfamily. D49 sub-subfamily. Requires Ca(2+) as cofactor. In terms of tissue distribution, expressed by the venom gland.

It is found in the secreted. The enzyme catalyses a 1,2-diacyl-sn-glycero-3-phosphocholine + H2O = a 1-acyl-sn-glycero-3-phosphocholine + a fatty acid + H(+). Its function is as follows. PLA2 catalyzes the calcium-dependent hydrolysis of the 2-acyl groups in 3-sn-phosphoglycerides. The protein is Basic phospholipase A2 cL037 of Laticauda semifasciata (Black-banded sea krait).